Consider the following 86-residue polypeptide: Candiduxin-1 (86 aa).

Residues 1–21 form the signal peptide; the sequence is MKTLLLTLVVLTIACLDLGYT. 4 disulfides stabilise this stretch: Cys24-Cys45, Cys38-Cys62, Cys66-Cys78, and Cys79-Cys84.

This sequence belongs to the three-finger toxin family. Short-chain subfamily. Orphan group IX sub-subfamily. As to expression, expressed by the venom gland.

Its subcellular location is the secreted. This Bungarus candidus (Malayan krait) protein is Candiduxin-1.